We begin with the raw amino-acid sequence, 429 residues long: UPF0242 protein CT_616 (429 aa).

The protein belongs to the UPF0242 family.

The protein is UPF0242 protein CT_616 of Chlamydia trachomatis serovar D (strain ATCC VR-885 / DSM 19411 / UW-3/Cx).